The chain runs to 341 residues: KH domain-containing RNA-binding protein qki.S (341 aa).

In terms of domain architecture, KH spans 88-154 (YVPVKEYPDF…WEHLNEDLHV (67 aa)). The short motif at 324-330 (RVHPYQR) is the Nuclear localization signal element.

It belongs to the quaking family. In terms of assembly, homodimer; does not require RNA to homodimerize.

It is found in the nucleus. The protein localises to the cytoplasm. Its function is as follows. RNA reader protein, which recognizes and binds specific RNAs, thereby regulating RNA metabolic processes, such as pre-mRNA splicing, circular RNA (circRNA) formation, mRNA export, mRNA stability and/or translation. Involved in various cellular processes, such as mRNA storage into stress granules, apoptosis, interferon response, glial cell fate and development. Binds to the 5'-NACUAAY-N(1,20)-UAAY-3' RNA core sequence. Acts as a mRNA modification reader that specifically recognizes and binds mRNA transcripts modified by internal N(7)-methylguanine (m7G). Promotes the formation of circular RNAs (circRNAs): acts by binding to sites flanking circRNA-forming exons. CircRNAs are produced by back-splicing circularization of pre-mRNAs. Required to protect and promote stability of mRNAs which promotes oligodendrocyte differentiation. Acts as an important regulator of muscle development. Essential for notochord development. This Xenopus laevis (African clawed frog) protein is KH domain-containing RNA-binding protein qki.S.